We begin with the raw amino-acid sequence, 435 residues long: Nucleosome assembly protein 1 (435 aa).

Residues 1 to 51 (MTEQPINTKKKNGDISKAPTPQNTPASVTNSYMRSKPPTVSTIQESNNEDG) are disordered. Residue serine 16 is modified to Phosphoserine. Over residues 19–50 (PTPQNTPASVTNSYMRSKPPTVSTIQESNNED) the composition is skewed to polar residues. 2 positions are modified to phosphothreonine: threonine 20 and threonine 24. Phosphoserine is present on serine 27. Residue threonine 29 is modified to Phosphothreonine. Residues serine 31 and serine 35 each carry the phosphoserine modification. The residue at position 42 (threonine 42) is a Phosphothreonine. Serine 46 carries the post-translational modification Phosphoserine. The residue at position 52 (threonine 52) is a Phosphothreonine. Composition is skewed to acidic residues over residues 146–185 (PTVEEIEEGQQLEEEEKGIDKEDGEEEEEEEEDDEEEDEQ) and 338–355 (EANDDDEGEEGDEEDEEL). 2 disordered regions span residues 146–187 (PTVE…EQGI) and 308–435 (ESFF…CKQQ). A compositionally biased stretch (basic and acidic residues) spans 356–374 (EARLELDYQLGEEIKDRLI). Residues 386–421 (VDFDYPELEGEGDEDEYSDEDGEGDSDDDDDDDDEA) are compositionally biased toward acidic residues.

The protein belongs to the nucleosome assembly protein (NAP) family. In terms of assembly, component of the GIN4 complex which forms a ring at the bud neck. Phosphorylation is cell cycle dependent and is important for its bud neck localization. Phosphorylation is highest in newly collected G1 cells, declines when the cells are traversing through the G1 phase, and reaches the lowest level around the time of bud emergence. Phosphorylation increases and remains high through the rest of the cell cycle until the beginning of the next one, when it decreases again. Phosphorylation involves two septin ring-associated kinases, CLA4 and GIN4, and its dephosphorylation occurs at the septin ring in a manner dependent on the phosphatases PP2A and CDC14.

It localises to the bud neck. Its subcellular location is the bud tip. Its function is as follows. Acidic protein, which assembles histones into an octamer. Involved in the regulation of the localization and the function of the septins during mitosis. This is Nucleosome assembly protein 1 (NAP1) from Candida albicans (strain SC5314 / ATCC MYA-2876) (Yeast).